The following is a 223-amino-acid chain: Ribonuclease T (223 aa).

The Exonuclease domain maps to 20–195; it reads VVIDVETAGF…YDTERTAELF (176 aa). Residues D23, E25, H182, and D187 each coordinate Mg(2+). H182 acts as the Proton donor/acceptor in catalysis.

This sequence belongs to the RNase T family. Homodimer. The cofactor is Mg(2+).

In terms of biological role, trims short 3' overhangs of a variety of RNA species, leaving a one or two nucleotide 3' overhang. Responsible for the end-turnover of tRNA: specifically removes the terminal AMP residue from uncharged tRNA (tRNA-C-C-A). Also appears to be involved in tRNA biosynthesis. The polypeptide is Ribonuclease T (Photobacterium profundum (strain SS9)).